A 266-amino-acid polypeptide reads, in one-letter code: Translation initiation factor 2 subunit alpha (266 aa).

One can recognise an S1 motif domain in the interval 10-81 (GELVVGKIDE…SAQQIDLSIK (72 aa)). The segment at 233–266 (AEDALEESADRAAKVVEQHGGSGQFHRERSEDDE) is disordered. Basic and acidic residues-rich tracts occupy residues 240–249 (SADRAAKVVE) and 257–266 (FHRERSEDDE).

This sequence belongs to the eIF-2-alpha family. As to quaternary structure, heterotrimer composed of an alpha, a beta and a gamma chain.

EIF-2 functions in the early steps of protein synthesis by forming a ternary complex with GTP and initiator tRNA. This is Translation initiation factor 2 subunit alpha from Haloarcula marismortui (strain ATCC 43049 / DSM 3752 / JCM 8966 / VKM B-1809) (Halobacterium marismortui).